A 519-amino-acid chain; its full sequence is Ribonuclease Y (519 aa).

A helical transmembrane segment spans residues 3 to 23 (PLAILISILLSLFCLVVGYYV). The region spanning 209-272 (TVSVVNLPND…ETARIALDKL (64 aa)) is the KH domain. In terms of domain architecture, HD spans 335 to 428 (VLKHSMEVAF…VAAADALSAA (94 aa)).

This sequence belongs to the RNase Y family.

It is found in the cell membrane. Functionally, endoribonuclease that initiates mRNA decay. The polypeptide is Ribonuclease Y (Bacillus licheniformis (strain ATCC 14580 / DSM 13 / JCM 2505 / CCUG 7422 / NBRC 12200 / NCIMB 9375 / NCTC 10341 / NRRL NRS-1264 / Gibson 46)).